Here is a 179-residue protein sequence, read N- to C-terminus: Acireductone dioxygenase (179 aa).

Positions 1–21 (MVQAWYMDDSTEDQRKPHHLQ) are disordered. Fe(2+)-binding residues include His88, His90, Glu94, and His133. 4 residues coordinate Ni(2+): His88, His90, Glu94, and His133.

Belongs to the acireductone dioxygenase (ARD) family. In terms of assembly, monomer. Interacts with MMP14. It depends on Fe(2+) as a cofactor. Requires Ni(2+) as cofactor.

The protein resides in the cytoplasm. It localises to the nucleus. Its subcellular location is the cell membrane. The catalysed reaction is 1,2-dihydroxy-5-(methylsulfanyl)pent-1-en-3-one + O2 = 4-methylsulfanyl-2-oxobutanoate + formate + 2 H(+). It catalyses the reaction 1,2-dihydroxy-5-(methylsulfanyl)pent-1-en-3-one + O2 = 3-(methylsulfanyl)propanoate + CO + formate + 2 H(+). The protein operates within amino-acid biosynthesis; L-methionine biosynthesis via salvage pathway; L-methionine from S-methyl-5-thio-alpha-D-ribose 1-phosphate: step 5/6. In terms of biological role, catalyzes 2 different reactions between oxygen and the acireductone 1,2-dihydroxy-3-keto-5-methylthiopentene (DHK-MTPene) depending upon the metal bound in the active site. Fe-containing acireductone dioxygenase (Fe-ARD) produces formate and 2-keto-4-methylthiobutyrate (KMTB), the alpha-ketoacid precursor of methionine in the methionine recycle pathway. Ni-containing acireductone dioxygenase (Ni-ARD) produces methylthiopropionate, carbon monoxide and formate, and does not lie on the methionine recycle pathway. In Xenopus tropicalis (Western clawed frog), this protein is Acireductone dioxygenase (adi1).